The following is a 248-amino-acid chain: Triosephosphate isomerase (248 aa).

N12 and K14 together coordinate substrate. Residues 16-30 (NGDRAGIDSIISFMK) form an igE-binding region. Residue H95 is the Electrophile of the active site. E165 serves as the catalytic Proton acceptor. IgE-binding stretches follow at residues 166–180 (PVWA…TPEQ) and 205–219 (RIIY…NCKE).

The protein belongs to the triosephosphate isomerase family. In terms of assembly, homodimer. Expressed in skeletal muscle (at protein level).

It localises to the cytoplasm. The catalysed reaction is D-glyceraldehyde 3-phosphate = dihydroxyacetone phosphate. It catalyses the reaction dihydroxyacetone phosphate = methylglyoxal + phosphate. The protein operates within carbohydrate biosynthesis; gluconeogenesis. It functions in the pathway carbohydrate degradation; glycolysis; D-glyceraldehyde 3-phosphate from glycerone phosphate: step 1/1. Its function is as follows. Triosephosphate isomerase is an extremely efficient metabolic enzyme that catalyzes the interconversion between dihydroxyacetone phosphate (DHAP) and D-glyceraldehyde-3-phosphate (G3P) in glycolysis and gluconeogenesis. In terms of biological role, it is also responsible for the non-negligible production of methylglyoxal a reactive cytotoxic side-product that modifies and can alter proteins, DNA and lipids. The polypeptide is Triosephosphate isomerase (Procambarus clarkii (Red swamp crayfish)).